Here is a 429-residue protein sequence, read N- to C-terminus: Maltoporin 2 (429 aa).

Residues 1–25 form the signal peptide; that stretch reads MMITLRKLPLAVAVAAGVMSAQALA. The span at 397–412 shows a compositional bias: polar residues; it reads GLQTKDSSGSGAFTSS. The disordered stretch occupies residues 397–416; it reads GLQTKDSSGSGAFTSSRGDD.

This sequence belongs to the porin LamB (TC 1.B.3) family. As to quaternary structure, homotrimer formed of three 18-stranded antiparallel beta-barrels, containing three independent channels.

It is found in the cell outer membrane. It carries out the reaction beta-maltose(in) = beta-maltose(out). In terms of biological role, involved in the transport of maltose and maltodextrins. The polypeptide is Maltoporin 2 (Klebsiella pneumoniae subsp. pneumoniae (strain ATCC 700721 / MGH 78578)).